The following is a 1025-amino-acid chain: Putative receptor-like protein kinase At3g47110 (1025 aa).

The signal sequence occupies residues 1-30 (MGVPCIVMRLILVSALLVSVSLEHSDMVCA). Over 31 to 653 (QTIRLTEETD…LPRRHSSVRK (623 aa)) the chain is Extracellular. N-linked (GlcNAc...) asparagine glycans are attached at residues Asn-63 and Asn-103. LRR repeat units lie at residues 104 to 128 (LSFL…VGNL), 130 to 151 (RLQY…VLSN), 152 to 175 (CSSL…EFGS), 176 to 200 (LSKL…LGNL), 202 to 224 (SLQM…IARL), 226 to 248 (QMIF…IYNL), 249 to 271 (SSLI…DFGS), 273 to 297 (LPNL…LSNI), 298 to 323 (SSLR…RLQN), and 325 to 344 (LLLG…DLDF). N-linked (GlcNAc...) asparagine glycans are attached at residues Asn-135 and Asn-151. N-linked (GlcNAc...) asparagine glycans are attached at residues Asn-188 and Asn-199. A glycan (N-linked (GlcNAc...) asparagine) is linked at Asn-247. The N-linked (GlcNAc...) asparagine glycan is linked to Asn-296. Residues Asn-331, Asn-336, Asn-350, and Asn-374 are each glycosylated (N-linked (GlcNAc...) asparagine). LRR repeat units follow at residues 351-374 (CSQL…FIAN), 376-400 (STQL…IGNL), 401-424 (VSLQ…LGEL), 426-448 (ELRK…LGNI), 449-472 (SGLT…LGSC), 473-496 (SYLL…LMEL), 498-520 (SLVV…IGKL), 521-544 (KFLL…LANC), 546-567 (SLEF…IRGL), 568-593 (TGLR…NFSK), and 595-616 (QNLN…VFRN). 4 N-linked (GlcNAc...) asparagine glycosylation sites follow: Asn-447, Asn-458, Asn-486, and Asn-503. Residues Asn-579, Asn-590, Asn-598, and Asn-616 are each glycosylated (N-linked (GlcNAc...) asparagine). Residues 654–674 (IITICVSAVMAALLLLCLCVV) traverse the membrane as a helical segment. The Cytoplasmic portion of the chain corresponds to 675-1025 (YLCWYKLRVK…RESFFRDEET (351 aa)). Thr-716 carries the phosphothreonine modification. Positions 719–1020 (FSSSNLIGSG…KLVSIRESFF (302 aa)) constitute a Protein kinase domain. ATP-binding positions include 725–733 (IGSGNFGAV) and Lys-748. Phosphotyrosine occurs at positions 798 and 843. The active-site Proton acceptor is the Asp-856. Position 904 is a phosphotyrosine (Tyr-904).

Belongs to the protein kinase superfamily. Ser/Thr protein kinase family.

The protein resides in the cell membrane. The catalysed reaction is L-seryl-[protein] + ATP = O-phospho-L-seryl-[protein] + ADP + H(+). It carries out the reaction L-threonyl-[protein] + ATP = O-phospho-L-threonyl-[protein] + ADP + H(+). The chain is Putative receptor-like protein kinase At3g47110 from Arabidopsis thaliana (Mouse-ear cress).